The primary structure comprises 72 residues: MFTMKKPLLLLFFLGTISLSLCQEERGADEDDGEMTEEVKRGLWNTIKEAGKKFAINVLDKIRCGIAGGCKT.

The signal sequence occupies residues 1–22 (MFTMKKPLLLLFFLGTISLSLC). Positions 23 to 39 (QEERGADEDDGEMTEEV) are cleaved as a propeptide — removed in mature form. Cysteine 64 and cysteine 70 are disulfide-bonded.

As to expression, expressed by the skin glands.

Its subcellular location is the secreted. Functionally, antimicrobial peptide active against a variety of Gram-positive and some Gram-negative bacterial strains. Has antifungal activity against a slime mold isolate. Has hemolytic activity against human erythrocytes. This is Palustrin-2CG1 from Amolops chunganensis (Chungan torrent frog).